The primary structure comprises 277 residues: Antigen 1 (277 aa).

The N-terminal stretch at 1-16 (MQLLALTLALCASIAA) is a signal peptide. N-linked (GlcNAc...) asparagine glycans are attached at residues N41, N71, N127, and N200. The interval 230–277 (CVGGEEENDGQGEEQTEEPAQDDQQDEAAEEEIPENCHTHEGGELHCT) is disordered. Over residues 233-263 (GEEENDGQGEEQTEEPAQDDQQDEAAEEEIP) the composition is skewed to acidic residues. Basic and acidic residues predominate over residues 264–277 (ENCHTHEGGELHCT).

The protein belongs to the ZPS1 family.

The protein is Antigen 1 (aspnd1) of Emericella nidulans (strain FGSC A4 / ATCC 38163 / CBS 112.46 / NRRL 194 / M139) (Aspergillus nidulans).